The chain runs to 326 residues: Glyceraldehyde-3-phosphate dehydrogenase, cytosolic (326 aa).

NAD(+) is bound by residues 2–3 (RI), Asp24, and Arg71. Residues 142–144 (SCT), Thr173, 202–203 (TG), and Arg225 each bind D-glyceraldehyde 3-phosphate. Cys143 acts as the Nucleophile in catalysis. Asn307 lines the NAD(+) pocket.

This sequence belongs to the glyceraldehyde-3-phosphate dehydrogenase family.

Its subcellular location is the cytoplasm. It catalyses the reaction D-glyceraldehyde 3-phosphate + phosphate + NAD(+) = (2R)-3-phospho-glyceroyl phosphate + NADH + H(+). The protein operates within carbohydrate degradation; glycolysis; pyruvate from D-glyceraldehyde 3-phosphate: step 1/5. Key enzyme in glycolysis that catalyzes the first step of the pathway by converting D-glyceraldehyde 3-phosphate (G3P) into 3-phospho-D-glyceroyl phosphate. Essential for the maintenance of cellular ATP levels and carbohydrate metabolism. This is Glyceraldehyde-3-phosphate dehydrogenase, cytosolic (GAPC) from Nicotiana tabacum (Common tobacco).